The chain runs to 764 residues: 1,4-alpha-glucan branching enzyme GlgB (764 aa).

Residue Asp-431 is the Nucleophile of the active site. Glu-484 (proton donor) is an active-site residue.

This sequence belongs to the glycosyl hydrolase 13 family. GlgB subfamily. In terms of assembly, monomer.

It carries out the reaction Transfers a segment of a (1-&gt;4)-alpha-D-glucan chain to a primary hydroxy group in a similar glucan chain.. Its pathway is glycan biosynthesis; glycogen biosynthesis. Catalyzes the formation of the alpha-1,6-glucosidic linkages in glycogen by scission of a 1,4-alpha-linked oligosaccharide from growing alpha-1,4-glucan chains and the subsequent attachment of the oligosaccharide to the alpha-1,6 position. The sequence is that of 1,4-alpha-glucan branching enzyme GlgB from Synechococcus sp. (strain CC9902).